Consider the following 114-residue polypeptide: Ribonuclease P protein component (114 aa).

This sequence belongs to the RnpA family. In terms of assembly, consists of a catalytic RNA component (M1 or rnpB) and a protein subunit.

It catalyses the reaction Endonucleolytic cleavage of RNA, removing 5'-extranucleotides from tRNA precursor.. Its function is as follows. RNaseP catalyzes the removal of the 5'-leader sequence from pre-tRNA to produce the mature 5'-terminus. It can also cleave other RNA substrates such as 4.5S RNA. The protein component plays an auxiliary but essential role in vivo by binding to the 5'-leader sequence and broadening the substrate specificity of the ribozyme. The chain is Ribonuclease P protein component from Lactiplantibacillus plantarum (strain ATCC BAA-793 / NCIMB 8826 / WCFS1) (Lactobacillus plantarum).